The following is a 381-amino-acid chain: E3 ubiquitin-protein ligase RNF13 (381 aa).

The first 34 residues, 1–34, serve as a signal peptide directing secretion; that stretch reads MLLSIGMLMLSATQVYTILTVQLFAFLNLLPVEA. Over 35 to 182 the chain is Lumenal; the sequence is DILAYNFENA…VPELSLPLEY (148 aa). The region spanning 64-160 is the PA domain; that stretch reads LKGFLINSKP…GESSANSLKD (97 aa). The N-linked (GlcNAc...) asparagine glycan is linked to Asn-88. A helical transmembrane segment spans residues 183 to 203; that stretch reads YLIPFLIIVGICLILIVIFMI. Topologically, residues 204-381 are cytoplasmic; sequence TKFVQDRHRN…EQDYNIANTV (178 aa). Residues 240–282 form an RING-type; atypical zinc finger; the sequence is CAICLEEYEDGDKLRILPCSHAYHCKCVDPWLTKTKKTCPVCK. The interval 285–381 is disordered; that stretch reads VVPSQGDSDS…EQDYNIANTV (97 aa). Residues 317-328 show a composition bias toward polar residues; it reads SARTQSFGSLSE. Positions 339–357 are enriched in acidic residues; that stretch reads SDYEDDDNEETDSSDADNE. Polar residues predominate over residues 365–381; the sequence is VQLQPNGEQDYNIANTV.

As to quaternary structure, interacts with ERN1. In terms of processing, autoubiquitinated. N-glycosylated and also modified with chondroitin sulfate. Expressed in the brain, heart, kidney, liver and spleen. Higher expression in adult tissues compared to the embryonic counterparts.

The protein localises to the endoplasmic reticulum membrane. It localises to the late endosome membrane. It is found in the lysosome membrane. Its subcellular location is the nucleus inner membrane. It carries out the reaction S-ubiquitinyl-[E2 ubiquitin-conjugating enzyme]-L-cysteine + [acceptor protein]-L-lysine = [E2 ubiquitin-conjugating enzyme]-L-cysteine + N(6)-ubiquitinyl-[acceptor protein]-L-lysine.. It functions in the pathway protein modification; protein ubiquitination. E3 ubiquitin-protein ligase that regulates cell proliferation. Involved in apoptosis regulation. Mediates ER stress-induced activation of JNK signaling pathway and apoptosis by promoting ERN1 activation and splicing of XBP1 mRNA. Also involved in protein trafficking and localization. This chain is E3 ubiquitin-protein ligase RNF13 (Rnf13), found in Mus musculus (Mouse).